Here is a 1146-residue protein sequence, read N- to C-terminus: Killer toxin subunits alpha/beta (1146 aa).

The first 17 residues, 1-17 (MNIFYIFLFLLSFVQGL), serve as a signal peptide directing secretion. A propeptide spanning residues 18 to 29 (EHTHRRGSLVKR) is cleaved from the precursor. LysM domains are found at residues 205-234 (ADQS…QPIC) and 254-303 (KTYK…NLCV). The Chitin-binding type-1 domain maps to 316–372 (IAECGPLAPGEKYNAKCPLNACCSEFGFCGLTKDYCDKKSSTTGAPGTDGCFSNCGY). Cystine bridges form between Cys-319–Cys-338, Cys-332–Cys-344, Cys-337–Cys-351, and Cys-366–Cys-370. The region spanning 383–735 (FKKIAYWLDA…DDTEDPFDEE (353 aa)) is the GH18 domain. Chitin is bound by residues Ile-424 and 447–450 (GGWD). Residue Glu-495 is the Proton donor of the active site. Residues Tyr-496, 562-565 (MTYD), and Trp-707 contribute to the chitin site. 5 N-linked (GlcNAc...) asparagine glycosylation sites follow: Asn-771, Asn-858, Asn-868, Asn-876, and Asn-1117.

It belongs to the glycosyl hydrolase 18 family. As to quaternary structure, the killer toxin is composed of three subunits: alpha, beta and gamma. In terms of processing, RF2 is potentially split by membrane-bound basic amino acid-specific peptidase to yield the alpha and beta subunits.

The catalysed reaction is Random endo-hydrolysis of N-acetyl-beta-D-glucosaminide (1-&gt;4)-beta-linkages in chitin and chitodextrins.. Its function is as follows. The alpha subunit is a potent exochitinase. Along with the beta subunit it plays a role in the initial interaction of the toxin with sensitive cells and allow the gamma subunit (the active toxin) to gain entry into the cell. This chain is Killer toxin subunits alpha/beta, found in Kluyveromyces lactis (strain ATCC 8585 / CBS 2359 / DSM 70799 / NBRC 1267 / NRRL Y-1140 / WM37) (Yeast).